Reading from the N-terminus, the 192-residue chain is AGFAGDDAPRAVFPSIVGRPRDAYVGDEAQSKRGILTLKIAPEESPVLLTEAPLNPKTGIVLDTGDGVTHTVPIYEGYCLPHAILRLDLAGRDLTAYLTKGYSFTTTAEREIVRSYELPDGQVITIGNERCDIDIRKDLFANNVLSGGTTMYPGIADREITALAPPTIKIKIIAPPERKEEYDESGPGIVHR.

This sequence belongs to the actin family.

The protein localises to the cytoplasm. It is found in the cytoskeleton. The enzyme catalyses ATP + H2O = ADP + phosphate + H(+). Functionally, actins are highly conserved proteins that are involved in various types of cell motility and are ubiquitously expressed in all eukaryotic cells. In Chionoecetes opilio (Atlantic snow crab), this protein is Actin, muscle.